A 368-amino-acid chain; its full sequence is Probable endopolygalacturonase A (368 aa).

The N-terminal stretch at 1-18 (MRSVKLFGLAALGSLGAA) is a signal peptide. Residues 19-31 (APAPSRVSDLTKR) constitute a propeptide that is removed on maturation. Cys35 and Cys50 are disulfide-bonded. PbH1 repeat units lie at residues 140–162 (LEDS…SVQA), 167–192 (LIDI…DISE), 193–214 (STGV…AINS), 215–235 (GENI…SIGS), 244–265 (VKNV…RIKT), 273–295 (VSQV…VIEQ), and 307–352 (TTGV…DITG). The active-site Proton donor is the Asp207. An intrachain disulfide couples Cys209 to Cys225. Residue His229 is part of the active site. Asn246 is a glycosylation site (N-linked (GlcNAc...) asparagine). 2 disulfides stabilise this stretch: Cys335/Cys340 and Cys359/Cys368.

This sequence belongs to the glycosyl hydrolase 28 family.

It is found in the secreted. The enzyme catalyses (1,4-alpha-D-galacturonosyl)n+m + H2O = (1,4-alpha-D-galacturonosyl)n + (1,4-alpha-D-galacturonosyl)m.. Involved in maceration and soft-rotting of plant tissue. Hydrolyzes the 1,4-alpha glycosidic bonds of de-esterified pectate in the smooth region of the plant cell wall. This chain is Probable endopolygalacturonase A (pgaA), found in Aspergillus fumigatus (strain CBS 144.89 / FGSC A1163 / CEA10) (Neosartorya fumigata).